The sequence spans 359 residues: Phosphate acyltransferase (359 aa).

The segment at 338 to 359 (LEGAAGRAARPPPPRRASSHDA) is disordered.

The protein belongs to the PlsX family. In terms of assembly, homodimer. Probably interacts with PlsY.

It localises to the cytoplasm. The enzyme catalyses a fatty acyl-[ACP] + phosphate = an acyl phosphate + holo-[ACP]. The protein operates within lipid metabolism; phospholipid metabolism. Functionally, catalyzes the reversible formation of acyl-phosphate (acyl-PO(4)) from acyl-[acyl-carrier-protein] (acyl-ACP). This enzyme utilizes acyl-ACP as fatty acyl donor, but not acyl-CoA. The chain is Phosphate acyltransferase from Anaeromyxobacter sp. (strain Fw109-5).